Here is a 445-residue protein sequence, read N- to C-terminus: UPF0210 protein SPT_0285 (445 aa).

This sequence belongs to the UPF0210 family. Homodimer.

The polypeptide is UPF0210 protein SPT_0285 (Streptococcus pneumoniae (strain Taiwan19F-14)).